Reading from the N-terminus, the 334-residue chain is Putative B3 domain-containing protein At3g49610 (334 aa).

Disordered stretches follow at residues 69-89 and 133-178; these read ERRTLGSSPTKTNTLFEGSEK and DEFE…KFDP. Polar residues-rich tracts occupy residues 73–84 and 141–157; these read LGSSPTKTNTLF and KSPTIRNSQSSPSSCLM. A compositionally biased stretch (basic residues) spans 161–173; the sequence is KRKRYQSSGKSKK. Residues 229-334 constitute a DNA-binding region (TF-B3); sequence FNKLLRNDFL…GVLCFALEKE (106 aa).

The protein localises to the nucleus. The protein is Putative B3 domain-containing protein At3g49610 of Arabidopsis thaliana (Mouse-ear cress).